We begin with the raw amino-acid sequence, 95 residues long: Co-chaperonin GroES (95 aa).

This sequence belongs to the GroES chaperonin family. As to quaternary structure, heptamer of 7 subunits arranged in a ring. Interacts with the chaperonin GroEL.

It is found in the cytoplasm. Its function is as follows. Together with the chaperonin GroEL, plays an essential role in assisting protein folding. The GroEL-GroES system forms a nano-cage that allows encapsulation of the non-native substrate proteins and provides a physical environment optimized to promote and accelerate protein folding. GroES binds to the apical surface of the GroEL ring, thereby capping the opening of the GroEL channel. The polypeptide is Co-chaperonin GroES (Cereibacter sphaeroides (strain KD131 / KCTC 12085) (Rhodobacter sphaeroides)).